The chain runs to 863 residues: Nitrate reductase [NADH] (863 aa).

Cysteine 137 serves as a coordination point for Mo-molybdopterin. The region spanning 484–559 (KKYVTKAMLE…LEQFYIAELA (76 aa)) is the Cytochrome b5 heme-binding domain. Heme-binding residues include histidine 519 and histidine 542. Residues 602–719 (KKQKAAELKE…KGPIGHFHYD (118 aa)) enclose the FAD-binding FR-type domain. FAD-binding positions include 659 to 662 (RAYT), 676 to 680 (VVKIY), phenylalanine 688, 693 to 695 (KFS), and threonine 746.

It belongs to the nitrate reductase family. As to quaternary structure, homodimer. FAD serves as cofactor. Requires Mo-molybdopterin as cofactor. It depends on heme as a cofactor.

The enzyme catalyses nitrite + NAD(+) + H2O = nitrate + NADH + H(+). Nitrate reductase is a key enzyme involved in the first step of nitrate assimilation in plants, fungi and bacteria. This is Nitrate reductase [NADH] from Ulva prolifera (Green seaweed).